A 473-amino-acid polypeptide reads, in one-letter code: UDP-N-acetylmuramate--L-alanine ligase (473 aa).

114–120 contacts ATP; it reads GTHGKTT.

It belongs to the MurCDEF family.

The protein resides in the cytoplasm. It catalyses the reaction UDP-N-acetyl-alpha-D-muramate + L-alanine + ATP = UDP-N-acetyl-alpha-D-muramoyl-L-alanine + ADP + phosphate + H(+). It participates in cell wall biogenesis; peptidoglycan biosynthesis. Its function is as follows. Cell wall formation. This is UDP-N-acetylmuramate--L-alanine ligase from Chlorobium luteolum (strain DSM 273 / BCRC 81028 / 2530) (Pelodictyon luteolum).